The primary structure comprises 556 residues: Aplysianin-A (556 aa).

The first 19 residues, 1 to 19 (MAVRFLALGLLIFVTSCSG), serve as a signal peptide directing secretion. Asparagine 150, asparagine 177, asparagine 374, asparagine 399, asparagine 414, and asparagine 430 each carry an N-linked (GlcNAc...) asparagine glycan.

To A.fulica achacin protein. As to quaternary structure, homotetramer. As to expression, albumen gland.

Its function is as follows. Has antibacterial activity against Gram-negative and Gram-positive bacteria. This is Aplysianin-A from Aplysia kurodai (Kuroda's sea hare).